Consider the following 391-residue polypeptide: Multidrug resistance protein MdtL (391 aa).

At 1–3 the chain is on the cytoplasmic side; the sequence is MSR. Residues 4–24 traverse the membrane as a helical segment; that stretch reads FLICSFALVLLYPAGIDMYLV. Over 25 to 37 the chain is Periplasmic; it reads GLPRIAADLNASE. A helical transmembrane segment spans residues 38–58; that stretch reads AQLHIAFSVYLAGMAAAMLFA. Topologically, residues 59–75 are cytoplasmic; the sequence is GKMADRSGRKPVAIPGS. Residues 76–96 form a helical membrane-spanning segment; sequence ALFIIASVFCSLAETSTLFLA. Topologically, residues 97–98 are periplasmic; sequence GR. A helical transmembrane segment spans residues 99 to 119; sequence FLQGLGAGCCYVVAFAILRDT. At 120–130 the chain is on the cytoplasmic side; the sequence is LDDRRRAKVLS. The chain crosses the membrane as a helical span at residues 131–151; sequence LLNGITCIIPVLAPVLGHLIM. The Periplasmic segment spans residues 152–157; it reads LKFPWQ. A helical transmembrane segment spans residues 158-178; that stretch reads SLFWAMAMMGIAVLMLSLFIL. Residues 179–202 are Cytoplasmic-facing; sequence KETRPASPAASDKPRENSESLLNR. A helical transmembrane segment spans residues 203-222; sequence FFLSRVVITTLSVSVILTFV. The Periplasmic segment spans residues 223–244; sequence NTSPVLLMEIMGFERGEYATIM. Residues 245 to 265 traverse the membrane as a helical segment; that stretch reads ALTAGVSMTFSFSTPFALGIF. Residues 266–268 lie on the Cytoplasmic side of the membrane; sequence KPR. A helical membrane pass occupies residues 269–289; it reads TLMITSQVLFLAAGITLAVSP. Topologically, residues 290–292 are periplasmic; the sequence is SHA. A helical transmembrane segment spans residues 293 to 313; sequence VSLFGITLICAGFSVGFGVAM. The Cytoplasmic segment spans residues 314–330; sequence SQALGPFSLRAGVASST. A helical membrane pass occupies residues 331–351; sequence LGIAQVCGSSLWIWLAAVVGI. The Periplasmic segment spans residues 352–355; it reads GAWN. The helical transmembrane segment at 356–376 threads the bilayer; sequence MLIGILIACSIVSLLLIMFVA. Residues 377–391 are Cytoplasmic-facing; it reads PGRPVAAHEEIHHHA.

It belongs to the major facilitator superfamily. DHA1 family. MdtL (TC 2.A.1.2.22) subfamily.

It localises to the cell inner membrane. This is Multidrug resistance protein MdtL from Shigella flexneri serotype 5b (strain 8401).